The chain runs to 466 residues: ATP synthase subunit beta (466 aa).

Residue 153-160 (GGAGVGKT) coordinates ATP.

It belongs to the ATPase alpha/beta chains family. F-type ATPases have 2 components, CF(1) - the catalytic core - and CF(0) - the membrane proton channel. CF(1) has five subunits: alpha(3), beta(3), gamma(1), delta(1), epsilon(1). CF(0) has three main subunits: a(1), b(2) and c(9-12). The alpha and beta chains form an alternating ring which encloses part of the gamma chain. CF(1) is attached to CF(0) by a central stalk formed by the gamma and epsilon chains, while a peripheral stalk is formed by the delta and b chains.

It is found in the cell membrane. It catalyses the reaction ATP + H2O + 4 H(+)(in) = ADP + phosphate + 5 H(+)(out). In terms of biological role, produces ATP from ADP in the presence of a proton gradient across the membrane. The catalytic sites are hosted primarily by the beta subunits. The protein is ATP synthase subunit beta of Oenococcus oeni (strain ATCC BAA-331 / PSU-1).